A 144-amino-acid chain; its full sequence is uncharacterized protein (144 aa).

Residues 24–67 (KLKELYQRLNQGINVEEVLKETVEDYKEKMEKYILEVLEEIEKY) are a coiled coil.

This is an uncharacterized protein from Aquifex aeolicus (strain VF5).